The primary structure comprises 301 residues: Acetylglutamate kinase (301 aa).

Substrate contacts are provided by residues 72–73, Arg-94, and Asn-199; that span reads GG.

It belongs to the acetylglutamate kinase family. ArgB subfamily.

Its subcellular location is the cytoplasm. It carries out the reaction N-acetyl-L-glutamate + ATP = N-acetyl-L-glutamyl 5-phosphate + ADP. It participates in amino-acid biosynthesis; L-arginine biosynthesis; N(2)-acetyl-L-ornithine from L-glutamate: step 2/4. Catalyzes the ATP-dependent phosphorylation of N-acetyl-L-glutamate. This chain is Acetylglutamate kinase, found in Bartonella bacilliformis (strain ATCC 35685 / KC583 / Herrer 020/F12,63).